The chain runs to 321 residues: PIH1 domain-containing protein 2 (321 aa).

Belongs to the PIH1 family.

The polypeptide is PIH1 domain-containing protein 2 (pih1d2) (Xenopus tropicalis (Western clawed frog)).